A 328-amino-acid chain; its full sequence is N-acyl-aromatic-L-amino acid amidohydrolase (carboxylate-forming) A (328 aa).

Zn(2+) contacts are provided by His-30 and Glu-33. Residues Arg-74 and 81-82 (NR) each bind substrate. Residue His-127 participates in Zn(2+) binding. Substrate contacts are provided by Glu-189 and Tyr-300.

This sequence belongs to the AspA/AstE family. Aspartoacylase subfamily. Homotetramer. The cofactor is Zn(2+).

It is found in the apical cell membrane. Its subcellular location is the cytoplasm. It catalyses the reaction an N-acyl-aromatic L-alpha-amino acid + H2O = an aromatic L-alpha-amino acid + a carboxylate. The catalysed reaction is an N-acetyl-L-cysteine-S-conjugate + H2O = an S-substituted L-cysteine + acetate. Functionally, plays an important role in deacetylating mercapturic acids in kidney proximal tubules. The sequence is that of N-acyl-aromatic-L-amino acid amidohydrolase (carboxylate-forming) A (acy3.1) from Danio rerio (Zebrafish).